Consider the following 319-residue polypeptide: MARKKIALVGAGNIGGTLAHLALLKQLGDVVLFDIAQGMPNGKALDLLQTCPIEGVDFKVRGTNDYKDLENSDVVIVTAGVPRKPGMSRDDLLGINIKVMQTVGEGIKHNCPNAFVICITNPLDIMVNMLQKFSGVPDNKIVGMAGVLDSARFRTFLADELNVSVQQVQAYVMGGHGDTMVPLTKMSNVAGVSLEQLVKEGKLKQERLDAIVSRTRSGGGEIVALLKTGSAYYAPAAAGIQMAESFLKDKKMILPCAAKVKAGMYGLDEDLFVGVPTEISANGVRPIEVEISDKEREQLQVSINAVKDLNKAAAEILAK.

Residues G10–G15 and D34 each bind NAD(+). 2 residues coordinate substrate: R83 and R89. NAD(+) contacts are provided by residues N96 and I119–N121. Substrate is bound by residues N121 and R152. H176 (proton acceptor) is an active-site residue.

Belongs to the LDH/MDH superfamily. MDH type 3 family.

The enzyme catalyses (S)-malate + NAD(+) = oxaloacetate + NADH + H(+). In terms of biological role, catalyzes the reversible oxidation of malate to oxaloacetate. This is Malate dehydrogenase from Francisella novicida.